Reading from the N-terminus, the 185-residue chain is Shikimate kinase (185 aa).

Residue 21-26 (GVGKTT) coordinates ATP. A Mg(2+)-binding site is contributed by Thr-25. Substrate contacts are provided by Asp-43, Arg-67, and Gly-90. Arg-129 serves as a coordination point for ATP. Arg-147 is a substrate binding site.

It belongs to the shikimate kinase family. As to quaternary structure, monomer. Requires Mg(2+) as cofactor.

Its subcellular location is the cytoplasm. It catalyses the reaction shikimate + ATP = 3-phosphoshikimate + ADP + H(+). The protein operates within metabolic intermediate biosynthesis; chorismate biosynthesis; chorismate from D-erythrose 4-phosphate and phosphoenolpyruvate: step 5/7. In terms of biological role, catalyzes the specific phosphorylation of the 3-hydroxyl group of shikimic acid using ATP as a cosubstrate. This is Shikimate kinase from Bacillus pumilus (strain SAFR-032).